A 432-amino-acid polypeptide reads, in one-letter code: Argininosuccinate lyase (432 aa).

It belongs to the lyase 1 family. Argininosuccinate lyase subfamily.

It is found in the cytoplasm. It carries out the reaction 2-(N(omega)-L-arginino)succinate = fumarate + L-arginine. Its pathway is amino-acid biosynthesis; L-arginine biosynthesis; L-arginine from L-ornithine and carbamoyl phosphate: step 3/3. The polypeptide is Argininosuccinate lyase (Xanthomonas axonopodis pv. citri (strain 306)).